Here is an 83-residue protein sequence, read N- to C-terminus: Hainantoxin-III 5 (83 aa).

The N-terminal stretch at 1-21 is a signal peptide; it reads MKASRFLALAGLVLLFVVGYA. A propeptide spanning residues 22-48 is cleaved from the precursor; it reads SESEEKEFPRELLSKIFAVDDFKGEER. Cystine bridges form between Cys50–Cys65, Cys57–Cys70, and Cys64–Cys77. The residue at position 81 (Leu81) is a Leucine amide.

The protein belongs to the neurotoxin 10 (Hwtx-1) family. 15 (Hntx-3) subfamily. In terms of assembly, monomer. In terms of tissue distribution, expressed by the venom gland.

The protein localises to the secreted. Functionally, selective antagonist of neuronal tetrodotoxin (TTX)-sensitive voltage-gated sodium channels (IC(50)=1270 nM on Nav1.1/SCN1A, 270 nM on Nav1.2/SCN2A, 491 nM on Nav1.3/SCN3A and 232 nM on Nav1.7/SCN9A). This toxin suppress Nav1.7 current amplitude without significantly altering the activation, inactivation, and repriming kinetics. Short extreme depolarizations partially activate the toxin-bound channel, indicating voltage-dependent inhibition of this toxin. This toxin increases the deactivation of the Nav1.7 current after extreme depolarizations. The toxin-Nav1.7 complex is gradually dissociated upon prolonged strong depolarizations in a voltage-dependent manner, and the unbound toxin rebinds to Nav1.7 after a long repolarization. Moreover, analysis of chimeric channels showed that the DIIS3-S4 linker is critical for toxin binding to Nav1.7. These data are consistent with this toxin interacting with Nav1.7 site 4 and trapping the domain II voltage sensor in the closed state. The polypeptide is Hainantoxin-III 5 (Cyriopagopus hainanus (Chinese bird spider)).